The sequence spans 833 residues: MSQTIDLTLDGLSCGHCVKRVKESLEQRPDVELADVTVTEAHVTGTASADALIETIKQAGYGATLSHPKAKPLTESSIPSEALAAVPHELPVATADEESQQLLLSGMSCASCVTRVQHALQSVPGVTQARVNLAERTALVMGSASAADLVQAVEKAGYGAEAIEDDIKRRERQQETAIATMKRFRWQAIVALAVGIPVMVWGMIGDNMMVTDDNRSLWLAIGLITLAVMVFAGGHFYRNAWKSLLNGTATMDTLVALGTGVAWLYSMSVNLWPQWFPMEARHLYYEASAMIIGLINLGHMLEARARQRSSKALEKLLDLTPPTARVVTEDGEKSVPLADVQPGMLLRLTTGDRVPVDGEITQGEAWLDEAMLTGEPIPQQKGEGDSVHAGTVVQDGSVLFRASAVGSHTTLSRIIRMVRQAQSSKPEIGQLADKISAVFVPVVVAIALFSAAIWYFFGPAPQIVYTLVIATTVLIIACPCALGLATPMSIISGVGRAAEFGVLVRDADALQRASTLDTLVFDKTGTLTEGKPQVVAIKTFNGVEEAQALRLAAALEQGSSHPLAHAILEKAGDDKLPQVNGFRTLRGLGVSGEAEGHQLLLGNQALLNEQHVATDDMTAEITAQASQGSTPVLLAIDGKAAALLAVRDPLRSDSIAALERLHNAGYRLVMLTGDNPTTANAIAKEAGIDEVIAGVLPDGKADAIKRLQSQGRQVAMVGDGINDAPALAQADVGIAMGGGSDVAIETAAITLMRHSLMGVADALAISRATLRNMKQNLLGAFIYNSIGIPVAAGILWPFTGTLLNPVVAGAAMALSSITVVSNANRLLRFKPKA.

HMA domains follow at residues 3–64 (QTID…YGAT) and 98–161 (ESQQ…YGAE). 4 residues coordinate Cu(+): Cys-14, Cys-17, Cys-109, and Cys-112. Transmembrane regions (helical) follow at residues 186 to 206 (WQAIVALAVGIPVMVWGMIGD), 217 to 237 (LWLAIGLITLAVMVFAGGHFY), 253 to 273 (TLVALGTGVAWLYSMSVNLWP), 283 to 303 (LYYEASAMIIGLINLGHMLEA), 437 to 457 (AVFVPVVVAIALFSAAIWYFF), and 463 to 483 (IVYTLVIATTVLIIACPCALG). The active-site 4-aspartylphosphate intermediate is Asp-522. The Mg(2+) site is built by Asp-719 and Asp-723. Transmembrane regions (helical) follow at residues 778-798 (LGAFIYNSIGIPVAAGILWPF) and 800-820 (GTLLNPVVAGAAMALSSITVV).

This sequence belongs to the cation transport ATPase (P-type) (TC 3.A.3) family. Type IB subfamily.

It is found in the cell inner membrane. The protein localises to the cytoplasm. It catalyses the reaction Cu(+)(in) + ATP + H2O = Cu(+)(out) + ADP + phosphate + H(+). Functionally, involved in Cu(+) export. Essential for copper tolerance under both aerobic and anaerobic conditions. In terms of biological role, probably also encodes a cytoplasmic copper chaperone CopA(Z) that is produced by programmed ribosomal frameshifting. This chain is Copper-exporting P-type ATPase (copA), found in Salmonella typhimurium (strain LT2 / SGSC1412 / ATCC 700720).